Consider the following 417-residue polypeptide: Squamosa promoter-binding-like protein 14 (417 aa).

Composition is skewed to gly residues over residues 1–26 and 51–60; these read MEMA…GGGG and AGGGGTGSGS. Disordered stretches follow at residues 1–32 and 51–102; these read MEMA…EHRQ and AGGG…PPPP. A compositionally biased stretch (low complexity) spans 61 to 74; sequence GSASAAPPSSSSKA. Residues 75–84 are compositionally biased toward gly residues; the sequence is AGGGRGGGGK. The segment at 101–178 adopts an SBP-type zinc-finger fold; the sequence is PPRCQVEGCG…AGHNERRRRP (78 aa). Positions 104, 109, 126, 129, 145, 148, and 152 each coordinate Zn(2+). The Bipartite nuclear localization signal motif lies at 161–177; it reads KRSCRRRLAGHNERRRR. S163 carries the phosphoserine modification. Zn(2+) is bound at residue C164. Residues 387 to 417 form a disordered region; the sequence is LQGNGPAPAPRIDPGSGSTFDQTSNTMDWSL. Over residues 402–417 the composition is skewed to polar residues; that stretch reads SGSTFDQTSNTMDWSL.

As to quaternary structure, interacts with PCF1 and PCF2. Interacts with IPI1. Interacts with D53. Interacts with SLR1. Interacts (via C-terminus) with SHI1. Phosphorylated at Ser-163 in response to infection by the fungal pathogen Magnaporthe oryzae. In terms of processing, ubiquitinated by IPI1, which leads to proteasomal degradation. As to expression, expressed in young panicles. Expressed in the shoot apex at both the vegetative and reproductive stages. Highly expressed in the promordia of primary and secondary branches. Highly expressed in young panicles.

It is found in the nucleus. Transcriptional activator that binds to the SBP-box DNA core binding motif 5'-GTAC-3'. Can target the TCP motif 5'-TGGGCC/T-3' through interaction with PCF1 and PCF2. Key regulator of the plant architecture that controls shoot branching and panicle development. Promotes panicle branching. Promotes high grain yield. Binds to the promoters of TB1 and DEP1. Suppresses rice tillering mainly through positive regulation of TB1. Regulates plant height and panicle length through positive regulation of DEP1. Repressed by D53 in strigolactone (SL) signaling. Acts with D53 to mediate the SL-regulated tiller development. Functions as a direct downstream component of D53 in regulating tiller number and SL-induced gene expression. Binds directly to the D53 promoter and plays a critical role in the negative feedback regulation of SL-induced D53 expression. Involved in defense response against pathogens. Phosphorylated at Ser-163 in response to infection by the fungal pathogen Magnaporthe oryzae. Phosphorylation reduces SPL14/IPA1 binding to the GTAC site in the DEP1 promoter and enhances binding to the TGGGCC site in the WRKY45 promoter. Binding to the promoter of the pathogen defense gene WRKY45 activates its expression, leading to enhanced disease resistance. Reduces gibberellin-mediated disease susceptibility by stabilizing SLR1. Possesses transactivation activity in yeast cells. The protein is Squamosa promoter-binding-like protein 14 of Oryza sativa subsp. japonica (Rice).